A 311-amino-acid polypeptide reads, in one-letter code: uncharacterized protein (311 aa).

The N-terminal stretch at 1–13 (MLLSLIFPIAVLG) is a signal peptide. Asparagine 115 carries an N-linked (GlcNAc...) asparagine glycan.

Its subcellular location is the secreted. This is an uncharacterized protein from Encephalitozoon cuniculi (strain GB-M1) (Microsporidian parasite).